We begin with the raw amino-acid sequence, 361 residues long: Chorismate synthase (361 aa).

Arg-48 and Arg-54 together coordinate NADP(+). FMN contacts are provided by residues 125–127 (RSS), 238–239 (NA), Gly-278, 293–297 (KPTSS), and Arg-319.

The protein belongs to the chorismate synthase family. Homotetramer. FMNH2 is required as a cofactor.

The enzyme catalyses 5-O-(1-carboxyvinyl)-3-phosphoshikimate = chorismate + phosphate. The protein operates within metabolic intermediate biosynthesis; chorismate biosynthesis; chorismate from D-erythrose 4-phosphate and phosphoenolpyruvate: step 7/7. Catalyzes the anti-1,4-elimination of the C-3 phosphate and the C-6 proR hydrogen from 5-enolpyruvylshikimate-3-phosphate (EPSP) to yield chorismate, which is the branch point compound that serves as the starting substrate for the three terminal pathways of aromatic amino acid biosynthesis. This reaction introduces a second double bond into the aromatic ring system. The polypeptide is Chorismate synthase (Shigella boydii serotype 18 (strain CDC 3083-94 / BS512)).